Here is a 267-residue protein sequence, read N- to C-terminus: Adenosine 5'-phosphosulfate reductase (267 aa).

A disordered region spans residues 1 to 29 (MPPFATIPATERNSAAQHQDPSPMSQPFD). The segment covering 11-25 (ERNSAAQHQDPSPMS) has biased composition (polar residues). The [4Fe-4S] cluster site is built by Cys139, Cys140, Cys228, and Cys231. Residue Cys256 is the Nucleophile; cysteine thiosulfonate intermediate of the active site.

This sequence belongs to the PAPS reductase family. CysH subfamily. The cofactor is [4Fe-4S] cluster.

The protein localises to the cytoplasm. It carries out the reaction [thioredoxin]-disulfide + sulfite + AMP + 2 H(+) = adenosine 5'-phosphosulfate + [thioredoxin]-dithiol. It participates in sulfur metabolism; hydrogen sulfide biosynthesis; sulfite from sulfate. In terms of biological role, catalyzes the formation of sulfite from adenosine 5'-phosphosulfate (APS) using thioredoxin as an electron donor. The sequence is that of Adenosine 5'-phosphosulfate reductase from Pseudomonas aeruginosa (strain LESB58).